Reading from the N-terminus, the 347-residue chain is MNKKSLNIVVMFGILMILAFSGCVDQNASESTSEDTTPKILKIFHAGSLAVPFGEYESLYEAEYPNVDVQREAAGSVACVRKITELNKTAEILASADYTLIPDMMMPDYADWYVMVAKNEIVIAYTENSQYYDEITTENWYEIFQRGGVKYGFSSPNDDPCGYRTQMVVQLAETAYGDSTIYDDLMLENSNFEVDENADGTYLVRSPASIEVNEEKVFMRSKEVDLLGPLETGAFDYLFIYKSVANQHNLSYIELPAEINLGSYANADDYAKASIILEGQNSTILAKPIVYGMTVPSNAEDYEEGVNFVKTVLENPDVFENAGQPVISPAIAVGNVPDELSDLVTMG.

The first 21 residues, 1 to 21, serve as a signal peptide directing secretion; the sequence is MNKKSLNIVVMFGILMILAFS.

This sequence belongs to the bacterial solute-binding protein 1 family. WtpA subfamily.

This is an uncharacterized protein from Methanococcus maripaludis (strain C5 / ATCC BAA-1333).